Consider the following 210-residue polypeptide: MTTKGILGKKVGMTQVFTEAGELIPVTVIDTTPNVVLQLKTVENDGYSSVQLGFDDKRQVLSNKPEQGHVAKANTNPKRFIHEIRNVELGDVKVGDTIAADIFEAGEIVDVTGTTKGHGFQGVIKKDGQRRGPMAHGSRYHRRPGSLGAVINRVFPGKKLPGRMGNKTVTIQHLEIVKADTENNVLLVKGNVPGAKKSYLVVKSTVKNTK.

The protein belongs to the universal ribosomal protein uL3 family. As to quaternary structure, part of the 50S ribosomal subunit. Forms a cluster with proteins L14 and L19.

Its function is as follows. One of the primary rRNA binding proteins, it binds directly near the 3'-end of the 23S rRNA, where it nucleates assembly of the 50S subunit. This chain is Large ribosomal subunit protein uL3, found in Pediococcus pentosaceus (strain ATCC 25745 / CCUG 21536 / LMG 10740 / 183-1w).